Here is a 314-residue protein sequence, read N- to C-terminus: Oxaloacetate tautomerase FAHD2A, mitochondrial (314 aa).

The transit peptide at 1-84 (MLGSSGRRLL…ATLSVVRRAL (84 aa)) directs the protein to the mitochondrion. Positions 159, 161, and 190 each coordinate Mg(2+).

It belongs to the FAH family. Mg(2+) is required as a cofactor. Requires Mn(2+) as cofactor.

Its subcellular location is the mitochondrion. The catalysed reaction is oxaloacetate = enol-oxaloacetate. Tautomerase that converts enol-oxaloacetate, a strong inhibitor of succinate dehydrogenase, to the physiological keto form of oxaloacetate. It is thereby required to maximize aerobic respiration efficiency by preventing succinate dehydrogenase inhibition. This chain is Oxaloacetate tautomerase FAHD2A, mitochondrial, found in Bos taurus (Bovine).